Consider the following 448-residue polypeptide: Probable glycine dehydrogenase (decarboxylating) subunit 1 (448 aa).

Belongs to the GcvP family. N-terminal subunit subfamily. In terms of assembly, the glycine cleavage system is composed of four proteins: P, T, L and H. In this organism, the P 'protein' is a heterodimer of two subunits.

The catalysed reaction is N(6)-[(R)-lipoyl]-L-lysyl-[glycine-cleavage complex H protein] + glycine + H(+) = N(6)-[(R)-S(8)-aminomethyldihydrolipoyl]-L-lysyl-[glycine-cleavage complex H protein] + CO2. The glycine cleavage system catalyzes the degradation of glycine. The P protein binds the alpha-amino group of glycine through its pyridoxal phosphate cofactor; CO(2) is released and the remaining methylamine moiety is then transferred to the lipoamide cofactor of the H protein. The polypeptide is Probable glycine dehydrogenase (decarboxylating) subunit 1 (Listeria monocytogenes serotype 4b (strain F2365)).